Here is a 206-residue protein sequence, read N- to C-terminus: Outer-membrane lipoprotein carrier protein (206 aa).

An N-terminal signal peptide occupies residues 1 to 21 (MKKLLCAVLLSPLLYSNAVLA).

This sequence belongs to the LolA family. As to quaternary structure, monomer.

The protein resides in the periplasm. Participates in the translocation of lipoproteins from the inner membrane to the outer membrane. Only forms a complex with a lipoprotein if the residue after the N-terminal Cys is not an aspartate (The Asp acts as a targeting signal to indicate that the lipoprotein should stay in the inner membrane). In Shewanella sp. (strain MR-4), this protein is Outer-membrane lipoprotein carrier protein.